The primary structure comprises 272 residues: 3-methyl-2-oxobutanoate hydroxymethyltransferase (272 aa).

Aspartate 43 and aspartate 82 together coordinate Mg(2+). Residues aspartate 43–serine 44, aspartate 82, and lysine 112 each bind 3-methyl-2-oxobutanoate. Glutamate 114 is a binding site for Mg(2+). Glutamate 179 functions as the Proton acceptor in the catalytic mechanism.

It belongs to the PanB family. As to quaternary structure, homodecamer; pentamer of dimers. The cofactor is Mg(2+).

Its subcellular location is the cytoplasm. The catalysed reaction is 3-methyl-2-oxobutanoate + (6R)-5,10-methylene-5,6,7,8-tetrahydrofolate + H2O = 2-dehydropantoate + (6S)-5,6,7,8-tetrahydrofolate. It functions in the pathway cofactor biosynthesis; (R)-pantothenate biosynthesis; (R)-pantoate from 3-methyl-2-oxobutanoate: step 1/2. Functionally, catalyzes the reversible reaction in which hydroxymethyl group from 5,10-methylenetetrahydrofolate is transferred onto alpha-ketoisovalerate to form ketopantoate. This chain is 3-methyl-2-oxobutanoate hydroxymethyltransferase, found in Staphylococcus epidermidis (strain ATCC 35984 / DSM 28319 / BCRC 17069 / CCUG 31568 / BM 3577 / RP62A).